The sequence spans 174 residues: Crossover junction endodeoxyribonuclease RuvC (174 aa).

Active-site residues include Asp8, Glu67, and Asp139. Positions 8, 67, and 139 each coordinate Mg(2+).

Belongs to the RuvC family. In terms of assembly, homodimer which binds Holliday junction (HJ) DNA. The HJ becomes 2-fold symmetrical on binding to RuvC with unstacked arms; it has a different conformation from HJ DNA in complex with RuvA. In the full resolvosome a probable DNA-RuvA(4)-RuvB(12)-RuvC(2) complex forms which resolves the HJ. It depends on Mg(2+) as a cofactor.

The protein resides in the cytoplasm. The enzyme catalyses Endonucleolytic cleavage at a junction such as a reciprocal single-stranded crossover between two homologous DNA duplexes (Holliday junction).. In terms of biological role, the RuvA-RuvB-RuvC complex processes Holliday junction (HJ) DNA during genetic recombination and DNA repair. Endonuclease that resolves HJ intermediates. Cleaves cruciform DNA by making single-stranded nicks across the HJ at symmetrical positions within the homologous arms, yielding a 5'-phosphate and a 3'-hydroxyl group; requires a central core of homology in the junction. The consensus cleavage sequence is 5'-(A/T)TT(C/G)-3'. Cleavage occurs on the 3'-side of the TT dinucleotide at the point of strand exchange. HJ branch migration catalyzed by RuvA-RuvB allows RuvC to scan DNA until it finds its consensus sequence, where it cleaves and resolves the cruciform DNA. The protein is Crossover junction endodeoxyribonuclease RuvC of Pseudomonas syringae pv. syringae (strain B728a).